A 254-amino-acid chain; its full sequence is 2,3-bisphosphoglycerate-dependent phosphoglycerate mutase (254 aa).

Residues 15 to 22, 28 to 29, Arg67, 94 to 97, Lys105, 121 to 122, and 188 to 189 contribute to the substrate site; these read RHGQSEWN, TG, ERHY, RR, and GN. The Tele-phosphohistidine intermediate role is filled by His16. Glu94 (proton donor/acceptor) is an active-site residue.

The protein belongs to the phosphoglycerate mutase family. BPG-dependent PGAM subfamily.

The enzyme catalyses (2R)-2-phosphoglycerate = (2R)-3-phosphoglycerate. It participates in carbohydrate degradation; glycolysis; pyruvate from D-glyceraldehyde 3-phosphate: step 3/5. Catalyzes the interconversion of 2-phosphoglycerate and 3-phosphoglycerate. The protein is 2,3-bisphosphoglycerate-dependent phosphoglycerate mutase of Corynebacterium jeikeium (strain K411).